The chain runs to 224 residues: Germin-like protein 8-4 (224 aa).

The signal sequence occupies residues 1–23 (MASSSSLYLLAALLALASWQAIA). A disulfide bond links cysteine 33 and cysteine 48. The Cupin type-1 domain maps to 70-213 (STMNKVGSNV…AFQVEKKVID (144 aa)). N-linked (GlcNAc...) asparagine glycosylation is present at asparagine 78. Mn(2+) contacts are provided by histidine 111, histidine 113, glutamate 118, and histidine 158.

It belongs to the germin family. As to quaternary structure, oligomer (believed to be a pentamer but probably hexamer).

It is found in the secreted. It localises to the extracellular space. The protein resides in the apoplast. Its function is as follows. Plays a role in broad-spectrum disease resistance. Probably has no oxalate oxidase activity even if the active site is conserved. The chain is Germin-like protein 8-4 (GER1) from Oryza sativa subsp. japonica (Rice).